Consider the following 445-residue polypeptide: Glutamyl-tRNA(Gln) amidotransferase subunit D (445 aa).

Residues 93-425 (SEIKIISTGG…EKIRSLMISN (333 aa)) enclose the Asparaginase/glutaminase domain. Active-site residues include Thr-103, Thr-179, Asp-180, and Lys-258.

It belongs to the asparaginase 1 family. GatD subfamily. Heterodimer of GatD and GatE.

It carries out the reaction L-glutamyl-tRNA(Gln) + L-glutamine + ATP + H2O = L-glutaminyl-tRNA(Gln) + L-glutamate + ADP + phosphate + H(+). Its function is as follows. Allows the formation of correctly charged Gln-tRNA(Gln) through the transamidation of misacylated Glu-tRNA(Gln) in organisms which lack glutaminyl-tRNA synthetase. The reaction takes place in the presence of glutamine and ATP through an activated gamma-phospho-Glu-tRNA(Gln). The GatDE system is specific for glutamate and does not act on aspartate. The protein is Glutamyl-tRNA(Gln) amidotransferase subunit D of Saccharolobus islandicus (strain M.16.27) (Sulfolobus islandicus).